The chain runs to 55 residues: Large ribosomal subunit protein bL32 (55 aa).

Residues 1-23 (MAVPKKKTSKAKRDQRRAHWKRK) are compositionally biased toward basic residues. Residues 1–26 (MAVPKKKTSKAKRDQRRAHWKRKATI) form a disordered region.

It belongs to the bacterial ribosomal protein bL32 family.

This chain is Large ribosomal subunit protein bL32, found in Picosynechococcus sp. (strain ATCC 27264 / PCC 7002 / PR-6) (Agmenellum quadruplicatum).